The primary structure comprises 255 residues: 5'-nucleotidase SurE (255 aa).

The a divalent metal cation site is built by aspartate 8, aspartate 9, serine 40, and asparagine 93.

This sequence belongs to the SurE nucleotidase family. The cofactor is a divalent metal cation.

It localises to the cytoplasm. The enzyme catalyses a ribonucleoside 5'-phosphate + H2O = a ribonucleoside + phosphate. Functionally, nucleotidase that shows phosphatase activity on nucleoside 5'-monophosphates. The protein is 5'-nucleotidase SurE of Rhodopseudomonas palustris (strain BisB18).